An 88-amino-acid polypeptide reads, in one-letter code: HssA/B-like protein 13 (88 aa).

It belongs to the hssA/B family.

The sequence is that of HssA/B-like protein 13 (hssl13) from Dictyostelium discoideum (Social amoeba).